The chain runs to 239 residues: tRNA (guanine-N(7)-)-methyltransferase (239 aa).

Positions 69, 94, 121, and 144 each coordinate S-adenosyl-L-methionine. Residue D144 is part of the active site. Substrate is bound at residue K148. The tract at residues 150–155 (RHNKRR) is interaction with RNA. Residues D180 and 217–220 (TKFE) each bind substrate.

The protein belongs to the class I-like SAM-binding methyltransferase superfamily. TrmB family. In terms of assembly, monomer.

It catalyses the reaction guanosine(46) in tRNA + S-adenosyl-L-methionine = N(7)-methylguanosine(46) in tRNA + S-adenosyl-L-homocysteine. It functions in the pathway tRNA modification; N(7)-methylguanine-tRNA biosynthesis. Catalyzes the formation of N(7)-methylguanine at position 46 (m7G46) in tRNA. The chain is tRNA (guanine-N(7)-)-methyltransferase from Yersinia pseudotuberculosis serotype O:1b (strain IP 31758).